A 297-amino-acid chain; its full sequence is E3 ubiquitin-protein ligase TRIM52 (297 aa).

An RING-type; degenerate zinc finger spans residues 20–62 (CAICLDYFKDPVSISCGHNFCRGCVTQLWSKEDEEDQNEEEDE). The segment at 72-167 (VGAMDGWDGS…DEDEDEELYP (96 aa)) is important for rapid proteolytic degradation by the proteasome. The segment at 222 to 263 (NDQGMCFKHQEALKLFCEVDKEAICVVCRESRSHKQHSVLPL) adopts a B box-type zinc-finger fold. Residues Cys-227, His-230, Cys-249, and His-255 each coordinate Zn(2+).

Belongs to the TRIM/RBCC family. (Microbial infection) Interacts with Japanese encephalitis virus non-structural protein 2 (NS2A); mediates the ubiquitination of NS2A, targeting it for proteasome-mediated degradation. In terms of processing, autoubiquitinated. Polyubiquitinated. Undergoes extremely rapid proteolytic degradation by the proteasome.

The protein resides in the cytoplasm. It is found in the cytosol. It localises to the nucleus. The catalysed reaction is S-ubiquitinyl-[E2 ubiquitin-conjugating enzyme]-L-cysteine + [acceptor protein]-L-lysine = [E2 ubiquitin-conjugating enzyme]-L-cysteine + N(6)-ubiquitinyl-[acceptor protein]-L-lysine.. Its pathway is protein modification; protein ubiquitination. In terms of biological role, E3 ubiquitin-protein ligase. Positively regulates the NF-kappa-B signaling pathway. Its function is as follows. (Microbial infection) Exhibits antiviral activity against Japanese encephalitis virus (JEV). Ubiquitinates the viral non-structural protein 2 (NS2A) and targets it for proteasome-mediated degradation. The polypeptide is E3 ubiquitin-protein ligase TRIM52 (TRIM52) (Homo sapiens (Human)).